Here is a 111-residue protein sequence, read N- to C-terminus: Ribosome-binding factor A (111 aa).

The protein belongs to the RbfA family. Monomer. Binds 30S ribosomal subunits, but not 50S ribosomal subunits or 70S ribosomes.

The protein localises to the cytoplasm. In terms of biological role, one of several proteins that assist in the late maturation steps of the functional core of the 30S ribosomal subunit. Associates with free 30S ribosomal subunits (but not with 30S subunits that are part of 70S ribosomes or polysomes). Required for efficient processing of 16S rRNA. May interact with the 5'-terminal helix region of 16S rRNA. The sequence is that of Ribosome-binding factor A from Helicobacter pylori (strain P12).